Here is a 281-residue protein sequence, read N- to C-terminus: ATP phosphoribosyltransferase (281 aa).

The protein belongs to the ATP phosphoribosyltransferase family. Long subfamily. Mg(2+) is required as a cofactor.

It localises to the cytoplasm. It catalyses the reaction 1-(5-phospho-beta-D-ribosyl)-ATP + diphosphate = 5-phospho-alpha-D-ribose 1-diphosphate + ATP. The protein operates within amino-acid biosynthesis; L-histidine biosynthesis; L-histidine from 5-phospho-alpha-D-ribose 1-diphosphate: step 1/9. With respect to regulation, feedback inhibited by histidine. Functionally, catalyzes the condensation of ATP and 5-phosphoribose 1-diphosphate to form N'-(5'-phosphoribosyl)-ATP (PR-ATP). Has a crucial role in the pathway because the rate of histidine biosynthesis seems to be controlled primarily by regulation of HisG enzymatic activity. This Corynebacterium aurimucosum (strain ATCC 700975 / DSM 44827 / CIP 107346 / CN-1) (Corynebacterium nigricans) protein is ATP phosphoribosyltransferase.